The chain runs to 292 residues: NAD kinase (292 aa).

Aspartate 73 functions as the Proton acceptor in the catalytic mechanism. Residues aspartate 73 to glycine 74, asparagine 147 to glutamate 148, histidine 158, arginine 175, aspartate 177, threonine 188 to serine 193, and glutamine 247 contribute to the NAD(+) site.

Belongs to the NAD kinase family. A divalent metal cation is required as a cofactor.

The protein resides in the cytoplasm. It carries out the reaction NAD(+) + ATP = ADP + NADP(+) + H(+). In terms of biological role, involved in the regulation of the intracellular balance of NAD and NADP, and is a key enzyme in the biosynthesis of NADP. Catalyzes specifically the phosphorylation on 2'-hydroxyl of the adenosine moiety of NAD to yield NADP. This chain is NAD kinase, found in Enterobacter sp. (strain 638).